The primary structure comprises 194 residues: Holliday junction branch migration complex subunit RuvA (194 aa).

Residues 1-64 form a domain I region; sequence MISSLNGILE…EDALSLFGFA (64 aa). The domain II stretch occupies residues 65-143; the sequence is TTEELSLFET…KNWEAGVLSQ (79 aa). The interval 144–149 is flexible linker; sequence VTEANS. The tract at residues 149 to 194 is domain III; the sequence is SDILATLTALGYSSSEAAKAISSLGDNGDLPLEERIKLALNYFNNK.

It belongs to the RuvA family. As to quaternary structure, homotetramer. Forms an RuvA(8)-RuvB(12)-Holliday junction (HJ) complex. HJ DNA is sandwiched between 2 RuvA tetramers; dsDNA enters through RuvA and exits via RuvB. An RuvB hexamer assembles on each DNA strand where it exits the tetramer. Each RuvB hexamer is contacted by two RuvA subunits (via domain III) on 2 adjacent RuvB subunits; this complex drives branch migration. In the full resolvosome a probable DNA-RuvA(4)-RuvB(12)-RuvC(2) complex forms which resolves the HJ.

It is found in the cytoplasm. Functionally, the RuvA-RuvB-RuvC complex processes Holliday junction (HJ) DNA during genetic recombination and DNA repair, while the RuvA-RuvB complex plays an important role in the rescue of blocked DNA replication forks via replication fork reversal (RFR). RuvA specifically binds to HJ cruciform DNA, conferring on it an open structure. The RuvB hexamer acts as an ATP-dependent pump, pulling dsDNA into and through the RuvAB complex. HJ branch migration allows RuvC to scan DNA until it finds its consensus sequence, where it cleaves and resolves the cruciform DNA. The protein is Holliday junction branch migration complex subunit RuvA of Dehalococcoides mccartyi (strain CBDB1).